Consider the following 360-residue polypeptide: Phospho-N-acetylmuramoyl-pentapeptide-transferase (360 aa).

Helical transmembrane passes span 27–47 (GALF…ISLL), 70–90 (GTPT…ILLW), 98–118 (VWVT…DDYL), 134–154 (LLLE…YSPA), 168–188 (TLLN…VGAG), 199–219 (GLAI…AYLV), 239–259 (LAVV…FNAP), 263–283 (IFMG…IAVA), 288–308 (IVLA…IIQV), and 337–357 (QVVI…LATL).

The protein belongs to the glycosyltransferase 4 family. MraY subfamily. It depends on Mg(2+) as a cofactor.

The protein resides in the cell inner membrane. The enzyme catalyses UDP-N-acetyl-alpha-D-muramoyl-L-alanyl-gamma-D-glutamyl-meso-2,6-diaminopimeloyl-D-alanyl-D-alanine + di-trans,octa-cis-undecaprenyl phosphate = di-trans,octa-cis-undecaprenyl diphospho-N-acetyl-alpha-D-muramoyl-L-alanyl-D-glutamyl-meso-2,6-diaminopimeloyl-D-alanyl-D-alanine + UMP. It participates in cell wall biogenesis; peptidoglycan biosynthesis. Functionally, catalyzes the initial step of the lipid cycle reactions in the biosynthesis of the cell wall peptidoglycan: transfers peptidoglycan precursor phospho-MurNAc-pentapeptide from UDP-MurNAc-pentapeptide onto the lipid carrier undecaprenyl phosphate, yielding undecaprenyl-pyrophosphoryl-MurNAc-pentapeptide, known as lipid I. The sequence is that of Phospho-N-acetylmuramoyl-pentapeptide-transferase from Methylorubrum extorquens (strain CM4 / NCIMB 13688) (Methylobacterium extorquens).